Reading from the N-terminus, the 1588-residue chain is Pentafunctional AROM polypeptide (1588 aa).

The segment at 1–392 (MVQLAKVPIL…YGDSAQFVSD (392 aa)) is 3-dehydroquinate synthase. NAD(+)-binding positions include 43 to 45 (DTN), 78 to 81 (ETSK), 109 to 111 (GGV), and aspartate 114. Arginine 125 provides a ligand contact to 7-phospho-2-dehydro-3-deoxy-D-arabino-heptonate. NAD(+) is bound at residue 134–135 (TS). 7-phospho-2-dehydro-3-deoxy-D-arabino-heptonate-binding residues include aspartate 141 and lysine 147. Residue lysine 156 coordinates NAD(+). Asparagine 157 contributes to the 7-phospho-2-dehydro-3-deoxy-D-arabino-heptonate binding site. Residues 174–177 (WLET) and asparagine 185 contribute to the NAD(+) site. Residue glutamate 189 coordinates Zn(2+). 7-phospho-2-dehydro-3-deoxy-D-arabino-heptonate contacts are provided by residues 189–192 (EVIK) and lysine 258. Residue glutamate 268 is the Proton acceptor; for 3-dehydroquinate synthase activity of the active site. 7-phospho-2-dehydro-3-deoxy-D-arabino-heptonate-binding positions include 272–276 (RNLLN) and histidine 279. Histidine 279 contacts Zn(2+). Histidine 283 (proton acceptor; for 3-dehydroquinate synthase activity) is an active-site residue. Residues histidine 295 and lysine 364 each contribute to the 7-phospho-2-dehydro-3-deoxy-D-arabino-heptonate site. Histidine 295 is a binding site for Zn(2+). Residues 405–871 (VYPFKDIPAD…WDVLHSELGA (467 aa)) are EPSP synthase. The active-site For EPSP synthase activity is the cysteine 853. The segment at 890 to 1080 (SVVIIGMRAA…IPSGRSAFVC (191 aa)) is shikimate kinase. Residue 895-902 (GMRAAGKT) participates in ATP binding. The segment at 1081 to 1293 (LTFDDLTEQT…AAPGQLTVAQ (213 aa)) is 3-dehydroquinase. Histidine 1198 functions as the Proton acceptor; for 3-dehydroquinate dehydratase activity in the catalytic mechanism. Residue lysine 1227 is the Schiff-base intermediate with substrate; for 3-dehydroquinate dehydratase activity of the active site. The tract at residues 1306–1588 (PKELFVVGKP…KAIFDAVTKE (283 aa)) is shikimate dehydrogenase.

It in the N-terminal section; belongs to the sugar phosphate cyclases superfamily. Dehydroquinate synthase family. This sequence in the 2nd section; belongs to the EPSP synthase family. The protein in the 3rd section; belongs to the shikimate kinase family. In the 4th section; belongs to the type-I 3-dehydroquinase family. It in the C-terminal section; belongs to the shikimate dehydrogenase family. Homodimer. It depends on Zn(2+) as a cofactor.

Its subcellular location is the cytoplasm. It carries out the reaction 7-phospho-2-dehydro-3-deoxy-D-arabino-heptonate = 3-dehydroquinate + phosphate. The catalysed reaction is 3-dehydroquinate = 3-dehydroshikimate + H2O. The enzyme catalyses shikimate + NADP(+) = 3-dehydroshikimate + NADPH + H(+). It catalyses the reaction shikimate + ATP = 3-phosphoshikimate + ADP + H(+). It carries out the reaction 3-phosphoshikimate + phosphoenolpyruvate = 5-O-(1-carboxyvinyl)-3-phosphoshikimate + phosphate. Its pathway is metabolic intermediate biosynthesis; chorismate biosynthesis; chorismate from D-erythrose 4-phosphate and phosphoenolpyruvate: step 2/7. It participates in metabolic intermediate biosynthesis; chorismate biosynthesis; chorismate from D-erythrose 4-phosphate and phosphoenolpyruvate: step 3/7. It functions in the pathway metabolic intermediate biosynthesis; chorismate biosynthesis; chorismate from D-erythrose 4-phosphate and phosphoenolpyruvate: step 4/7. The protein operates within metabolic intermediate biosynthesis; chorismate biosynthesis; chorismate from D-erythrose 4-phosphate and phosphoenolpyruvate: step 5/7. Its pathway is metabolic intermediate biosynthesis; chorismate biosynthesis; chorismate from D-erythrose 4-phosphate and phosphoenolpyruvate: step 6/7. Its function is as follows. The AROM polypeptide catalyzes 5 consecutive enzymatic reactions in prechorismate polyaromatic amino acid biosynthesis. The chain is Pentafunctional AROM polypeptide from Saccharomyces cerevisiae (strain YJM789) (Baker's yeast).